The sequence spans 108 residues: Phosphoribosyl-ATP pyrophosphatase (108 aa).

It belongs to the PRA-PH family.

The protein resides in the cytoplasm. The catalysed reaction is 1-(5-phospho-beta-D-ribosyl)-ATP + H2O = 1-(5-phospho-beta-D-ribosyl)-5'-AMP + diphosphate + H(+). The protein operates within amino-acid biosynthesis; L-histidine biosynthesis; L-histidine from 5-phospho-alpha-D-ribose 1-diphosphate: step 2/9. This chain is Phosphoribosyl-ATP pyrophosphatase, found in Pelobacter propionicus (strain DSM 2379 / NBRC 103807 / OttBd1).